Reading from the N-terminus, the 233-residue chain is Type IV secretion system protein PtlE homolog (233 aa).

The chain crosses the membrane as a helical span at residues 42–62; it reads VAWAALAVTALSLIAIATMLP.

It belongs to the virB8 family.

It is found in the cell inner membrane. The chain is Type IV secretion system protein PtlE homolog (ptlE) from Bordetella parapertussis (strain 12822 / ATCC BAA-587 / NCTC 13253).